The primary structure comprises 671 residues: MTKYNEAYCDVLIVGAGPAGVMAAAHLLSYGTTARPHRVRIFDATKEVNGSDESTESLSTDVIADALNSGASGPEKDAASTTEDLPMLVTTLQVSDVLHDTGDDTKIAYRETATEQQVLLLADTTANTSSTMNPRSMCEAGCRFHQIYQGHCFPEYELDSERLRSVDGRAQVLEDEHETGQLRLERLGRPEELLELDEENSMSVVTNLKAAPYKFLMKDVDENFPGELSTSGGKTTSISADESAIDAALHAVWDADDLGAAWHLDEASGLRAVDWNAAQWFKSGQPWTPDAAKSLQEGRVFLAGDARHRHPPLTGIGKNTSIADCYNLTWKLLGVLLGVARADPARTYVAERVYIRMRAATDIAVDAEMESLAAKWITVQLTLSRSWISSAKEAERWDAVLRDSAMSASKPMWTTSDMRASFDAGLMGHGHAHDHVTPTIKEFASSSISRSISELASTSWWESRGWGNGGPFESLMEDARWTGAVESNCRYAAYDRDAPVLHEHVAWVTRFTSRARTAVLEAAVGQAHVVDCWDVGLVEPALDDLDSAGAGLHVAHHADQWPAQLDEAVWPRESLSDWRIVTDTSATGEGYQTSPREAPGDYADLNADNAKAHFNGQFAGHKAYGDAAAADGGGCHGRILVGPAVRGRHLHREIPLGEECQRAAQPLFKEV.

Residues aspartate 10–aspartate 43 and leucine 295–aspartate 305 each bind FAD.

This sequence belongs to the PheA/TfdB FAD monooxygenase family. The cofactor is FAD.

Its subcellular location is the cytoplasm. The enzyme catalyses phenol + NADPH + O2 + H(+) = catechol + NADP(+) + H2O. It participates in aromatic compound metabolism; phenol degradation. Its function is as follows. Hydroxylates phenol to catechol. Also acts on cresols. In Ralstonia pickettii (Burkholderia pickettii), this protein is Phenol 2-monooxygenase (tbuD).